The chain runs to 837 residues: Katanin p80 WD40 repeat-containing subunit B1 homolog KTN80.4 (837 aa).

WD repeat units lie at residues 14–54 (AHSA…AILS), 57–96 (GHSS…IVRT), 99–138 (GHRS…CIHT), 141–182 (GHTR…TEFK), 184–222 (HEGQ…LIGS), 225–265 (PETA…DGVD), and 267–304 (GWSR…TEPC). The DWD box signature appears at 115 to 131 (FFASGSLDTNLKIWDIR). Disordered regions lie at residues 307 to 328 (GDTA…DPVV), 358 to 462 (GRLS…ANPV), and 501 to 614 (LQAA…LVIN). 2 stretches are compositionally biased toward polar residues: residues 376-387 (IGRSSTSQNSES) and 412-450 (TFSS…TSRR). Residues 509-520 (SPSSRNNPDLPD) show a composition bias toward low complexity. Basic and acidic residues-rich tracts occupy residues 553–563 (ATERSINDFRY) and 580–595 (RNHD…RSNR).

Belongs to the WD repeat KATNB1 family. As to quaternary structure, component of KTN80-KTN1 complexes composed of a hexamer of KTN1-KTN80 heterodimers that sense microtubule (MT) geometry to confer precise MT severing. Interacts directly with AAA1/KTN1, and weakly with KTN80.1 and KTN80.3. Expressed in siliques, flowers, leaves, stems and roots.

Its subcellular location is the cytoplasm. It localises to the cytoskeleton. In terms of biological role, may participate in a complex which severs microtubules in an ATP-dependent manner. This activity may promote rapid reorganization of cellular microtubule arrays. Confers precision to microtubule (MT) severing by specific targeting of KTN1 to MT cleavage sites such as crossover or branching nucleation sites. Together with other KTN80s, regulates cell elongation by modulating MT organization. This Arabidopsis thaliana (Mouse-ear cress) protein is Katanin p80 WD40 repeat-containing subunit B1 homolog KTN80.4.